Here is a 505-residue protein sequence, read N- to C-terminus: Transcription factor VHR2 (505 aa).

Over residues 1 to 16 (MIDDTENSKIHLEGSH) the composition is skewed to basic and acidic residues. Disordered stretches follow at residues 1 to 23 (MIDDTENSKIHLEGSHKTGKYTG), 105 to 179 (NRKR…LPYP), and 421 to 460 (QSNPMRPHSTSEVLSAHSSTKDASTPGKEEPRVTRSSTSA). Residues 133 to 148 (PSSSNMGSCSASNASS) are compositionally biased toward low complexity. Positions 421-443 (QSNPMRPHSTSEVLSAHSSTKDA) are enriched in polar residues.

This sequence belongs to the VHR1 family.

It is found in the nucleus. Transcription factor that regulates ERG9, but seems to have a more global function in transcription. The chain is Transcription factor VHR2 (VHR2) from Saccharomyces cerevisiae (strain ATCC 204508 / S288c) (Baker's yeast).